The chain runs to 243 residues: Sec-independent protein translocase protein TatC (243 aa).

The next 7 membrane-spanning stretches (helical) occupy residues 18 to 38 (VIII…NYVD), 70 to 90 (IAII…IWSF), 106 to 126 (MIPV…FTVF), 132 to 152 (FLLQ…KYIS), 153 to 173 (FALN…VVYI), 191 to 211 (YALL…DVIS), and 213 to 233 (LLMA…AKFI).

It belongs to the TatC family. Forms a complex with TatA.

Its subcellular location is the cell membrane. Part of the twin-arginine translocation (Tat) system that transports large folded proteins containing a characteristic twin-arginine motif in their signal peptide across membranes. This Carboxydothermus hydrogenoformans (strain ATCC BAA-161 / DSM 6008 / Z-2901) protein is Sec-independent protein translocase protein TatC.